The primary structure comprises 431 residues: Glucose-6-phosphate isomerase (431 aa).

Glu284 (proton donor) is an active-site residue. Catalysis depends on residues His305 and Lys420.

This sequence belongs to the GPI family.

It localises to the cytoplasm. The enzyme catalyses alpha-D-glucose 6-phosphate = beta-D-fructose 6-phosphate. It functions in the pathway carbohydrate biosynthesis; gluconeogenesis. It participates in carbohydrate degradation; glycolysis; D-glyceraldehyde 3-phosphate and glycerone phosphate from D-glucose: step 2/4. Catalyzes the reversible isomerization of glucose-6-phosphate to fructose-6-phosphate. This chain is Glucose-6-phosphate isomerase, found in Mycoplasma genitalium (strain ATCC 33530 / DSM 19775 / NCTC 10195 / G37) (Mycoplasmoides genitalium).